The primary structure comprises 80 residues: Omega-conotoxin-like 1 (80 aa).

The N-terminal stretch at 1 to 22 (MKLTCVLIVVVLFLTACQLITT) is a signal peptide. The propeptide occupies 23 to 49 (DDSTGKQRYQAWKLRSKMQNSVLSRLS). Disulfide bonds link Cys52-Cys66, Cys59-Cys70, and Cys65-Cys79.

This sequence belongs to the conotoxin O1 superfamily. Post-translationally, peptide predicted to begin at Arg-51, but it seems more probable that it begins at Cys-52, since this position corresponds to a dibasic residue cleavage. In terms of tissue distribution, expressed by the venom duct.

It is found in the secreted. Omega-conotoxins act at presynaptic membranes, they bind and block voltage-gated calcium channels (Cav). In Conus capitaneus (Captain cone), this protein is Omega-conotoxin-like 1.